Here is a 958-residue protein sequence, read N- to C-terminus: Glycine dehydrogenase (decarboxylating) (958 aa).

Lysine 708 is modified (N6-(pyridoxal phosphate)lysine).

The protein belongs to the GcvP family. The glycine cleavage system is composed of four proteins: P, T, L and H. It depends on pyridoxal 5'-phosphate as a cofactor.

It carries out the reaction N(6)-[(R)-lipoyl]-L-lysyl-[glycine-cleavage complex H protein] + glycine + H(+) = N(6)-[(R)-S(8)-aminomethyldihydrolipoyl]-L-lysyl-[glycine-cleavage complex H protein] + CO2. The glycine cleavage system catalyzes the degradation of glycine. The P protein binds the alpha-amino group of glycine through its pyridoxal phosphate cofactor; CO(2) is released and the remaining methylamine moiety is then transferred to the lipoamide cofactor of the H protein. This chain is Glycine dehydrogenase (decarboxylating), found in Proteus mirabilis (strain HI4320).